Reading from the N-terminus, the 4083-residue chain is MSDTNCSAQKLDKSDSVHHMSHSQARPELPPLPVSANEEPSELYKTVMSHSFYPPLMQRTSWTLAVPFKEQDHHRGPSDSIGNNYSLTARDMKLKDLLKVYQPVTISIPRDKTSQGLPLGTSSKTSTEPSKKKMKFNLKAKDDVTGMPFVCKFSSSLSIKNTTDSSVTHPESRPMSPEQQMDVMLQQEMEIESKEQKPSELDLERYYYYLTNGIRKDMIAPENEEVMMRIYKLIPKTLLTTPALEPLQVSLRSEKESDYYYSLMKSIVDYILMDPMEKKRLFIKSIPRLFPHRVIRAPVPWHNIYQSTKKWNEEHLHTVNPMMYKLKELWFAEFQNLRFVRTADLLAGKLPLLPHEYKEVVQKHCREARHILLTKWIPTCAQLFVTQKEHWVHFAPKNDYDSSRNIEEYFASVASFMSLQLRDLVIKSLRDLVSFFMIHKDGNDFKEPYQEMDFFIPQLIMIKLEVRDPIIVFNPTFDDCWQLIKNSFLEIIKNSDGIPKVYLCWKPLASYICVSPHLRMTSVLQVESILFPDLKGYNMILGTVNPEESLVSDFLDQTLEVFKKNQVGPYKYLNVYKKYDDLLDNMAEKGISEFLKEKHEIEDFVTSINSIKKRKNEIASMHITVPLAMFCLDAVFLNYDLCERAQNLKDNLILYQVDVNRETNTSICNQYSTIADKVSEIPANTAELVALIEYLKKSSDVTVFKLRRQLRDASERLEFLMDYADLPSESIEDVFESSRNLLMSKRDQAEMDLIKRCSEFESRLEGYSKELEMFRKREVMTTEEMKNNVEKLHDLSKNLDLALTEFELINKEEELLEKEKSSFPLLQTLMINKIPYEQLWVTAYEFSTKSEEWMNGPLYLMNAEQIAEEIGNMWRTTYKLTKTLIDVPAPKRLAENVKLKIEKFKQHIPILNIACNPGMKDRHWQQISDIVGYEIKPTETTCLANMLEYGFGKFVDKLEPIGAAASKEYSLEKNLEKMKADWVNMCFSFVKYRDTDTSILCAVDDIQLILDDHVIKTQTMCGSVFIKPIEAECRKWEEKLVRVQENLDAWLKCQVTWLYLEPIFSSEDIIAQMPEEGKKFTTVDTYWKSLMAQAVNDTRVMVAADQPRMTEKLQEANVLLEDIQRGLNDYLEKKRLFFPRFFFLSNDELLEILSETKDPLRVQPHLKKCFEGIAKLEFTDNLEIKGMISSEKETVPFIQTIYPVKAKGMVEKWLQQVEQVMLASMRQVIENGIEAYVQVPRNAWVLEWPGQVVICVSSIFWTREVSEALVEDTLTDFLKKSNDQIAQIVELVRGKLSSGARLTLGALTVIDVHARDVVAKLRHDHINSLNDFQWISQLRYYWTEKNVHVQMITTEALYGYEYLGNSPRLVITPLTDRCYRTLMGALKLNLGGAPEGPAGTGKTETTKDLAKALAKQCVVFNCSDGLDYKAMGKFFKGLAQAGAWACFDEFNRIEVEVLSVVAQQILSIQQAIIRKLKRFIFEGTELSLNPTCAVFITMNPGYAGRAELPDNLKALFRTVAMMVPDYALIGEISLYSMGFLDSRSLAQKIVATYRLCSEQLSSQHHYDYGMRAVKSVLTAAGNLKLKYPEENESVLLLRALLDVNLAKFLAQDVPLFQGIISDLFPGVVLPKPDYEVFLEALNNNIRKMKLQPVPWFIGKIIQIYEMMLVRHGYMIVGDPMGGKTSAYKVLAAALGDLHAANQMEEFAVEFKIINPKAITMGQLYGCFDAVSHEWTDGVLANAFREQASSITDDRKWIIFDGPVDAVWIENMNTVLDDNKKLCLMSGEIIQMSSKMSLIFEPADLEQASPATVSRCGMIYMEAHQLGWKPLKDSYMDTLPRCLTKEHTELVEDMFTWLVQPCLDFSRLHCKFVVQTSPIHLAFSMMRLYSSLLDEIRDIQEEEMEIYEGLSSQQIFLWLQGLFLFSLVWTLAGTINAESRKKFDVFFRNLIMGMDDRNPRPKSVKLTKNNIFPERGSIYDFYFLKQGGGHWNAWTEYITKEEETIPANAKVSDLIIPTMETARQSFFLKTYLDHEIPILFVGPTGTGKSAITNDFLLHLPKNVYQPNFINFSARTSANQTQDIIMSKLDRRRKGLFGPPIGKKAVVFVDDLNMPAKEVYGAQPPIELLRQWIDHGYWFDKKDTNRLDIVDVLLVTAMGPPGGGRNDITGRFTRHLNIISINAFEDEILTKIFSSIADWHFGKGFDVMFLRYGKMLVQATQTIYRAAVENFLPTPSKSHYVFNLRDFSRVIQGVLLCPHTHLQDLEKFIRLWIHEVYRVFYDRLIDNDDRQTFFNLVKETTSNCFKQTMEKVLIHLSPTGKITDDNIRSLFFGDYLKPESDQKIYDEIIDLRGLTVVMEYYLDEFNSVSKAPMSLVMFKFAIEHISRICRVLKQKKGHLLLVGIGGSGRQSATKLSTFMNSYELYQIEITKNYTNSDWREDLKKIMLQSGVATKSTVFLFSDNQIKHESFVEDINMLLNTGDVPNIFPADEKADLVEKMQTAARTEGEKVEATPLSMYNFFIERGTNRAYFSLAMSPIGDAFRTRLRMFPSLINCCTIDWFQSWPTDALELVANKFLEDVELDDNIRAEVVSMCKYFQESVKKLSVDYYNTLLRHNYVTPTSYLELILTFKTLLNSKRQEVDTIRNRYLAGLQKLEFASSQVAVMQVELTALQPQLIQTSEDTAMMMVKIELETKEADAKKLLVQADEKEANAAAAISQAIKNECEGDLAEAMPALEAALAALDTLNPSDITLVKSMQNPPGPVKLVMESICVMKGLKPERKPDPSGSGKMIEDYWGVSRKILGDLKFLESLKTYDKDNIPSVIMKRIRERFIDHPDFQPAVIKNVSSACEGLCKWVRAMEVYDRVAKVVAPKRERLREAEGKLEIQMQKLNQKRAELKLVEDRLQDLNDEFELMNRKKNSLEKNIEICSQKLVRAEKLISGLGGEKDRWTEAARQLGIRYDNLTGDVLLASGTVAYLGAFTVDYRAQCQNEWLVSCKDKVIPGSVDFSLSNTLGDPIKIRAWQIAGLPVDSFSVDNGIIVSNSRRWPLMIDPQGQANKWVKNMEKTNKLSVIKFSDTNYVRTLENALQFGTPVLLENVGEELDAFIEPILLKATFKQQGVEYMRLGENIIEYSREFKFYITTRLRNPHYLPEVAVKVCLLNFMITPLGLQDQLLGIVAAKEKPELEEKKNKLILESAQNKKQLKEIEDKILEVLSLCEGNILEDETAIKILSSSKVLSEEISEKQEIASVTETQIDETRMGYKPVAVHSAAIFFCISDLAHIEPMYQYSLTWFINLYVQSLANSNKSDELDLRIEYIIEHFTLSIYNNVCRSLFEKDKLLFSLLLTVGLLKERKAIDEEVWYFLLTGGVALDNPFPNPAPEWLSEKSWGEIVRASSLQKLKGLMEDVMQNIKVWKDIYDSAWPHEESLPSPWFFLQTLEKIAILRCLRPDKIVPAIQNFICETMGKIFIEAPTFDLQGSYGDSSCCVPLIFILSPGADPMAGLLKFADDVSMGGTKTQTISLGQGQGPIAANMINKAIHEGTWVVLQNCHLATSWMPALEKICEEVIVPENTNSEFRLWLTSYPSEKFPVSILQNGIKMTNEPPKGLRANLLRSYLNDPISDPLFFQSCTKPVIWQKLLFGLCFFHAIVQERRNYGALGWNIPYEFNESDLRISMRQIQMFLNDYEEVPFEALTYLTGECNYGGRVTDDKDRRLLLSLLSMFYCKEIETDNYHIAPGDAYVIPPYGSYQSYIEYLRTLPITAHPEVFGLHENADITKDNQETNQLFQGVLLTLPRQSGGSGKSPQEVVEELAQDILSKLPNDFNLEEVMKKYPVVYKESMNTVLRQELIRFNRLTKVVRRSLIDLGRAIKGQVLMSSELEEVFNSMLVGKVPAMWAAKSYPSLKPLGGYVADLLARLTFFQEWIDKGPPVVFWISGFYFTQSFLTGVSQNYARKYTIPIDHIGFEFEVTPKETTMENIPEDGAYIKGLFLEGARWDRSTSQIGESLPKILYDPLPIIWLKPGESASFLHQDIYVCPVYKTSARRGILSTTGHSTNYVLSIELPTDMPQKHWINRGVASLCQLDN.

2 disordered regions span residues Met-1–Asn-37 and Asp-111–Lys-132. Residues Met-1–Leu-1357 form a stem region. 2 coiled-coil regions span residues Ile-1026 to Lys-1052 and Arg-1108 to Lys-1133. 4 AAA regions span residues Tyr-1358–Ala-1579, Glu-1639–Lys-1870, Thr-2003–Gly-2251, and Glu-2362–His-2613. ATP contacts are provided by residues Gly-1396–Thr-1403, Gly-1677–Thr-1684, Gly-2041–Ser-2048, and Gly-2401–Gln-2408. The interval Phe-2628 to Cys-2927 is stalk. Residues Gln-2651–Ala-2714 adopt a coiled-coil conformation. 2 AAA regions span residues Leu-3012 to Glu-3242 and Ile-3455 to Met-3679.

The protein belongs to the dynein heavy chain family. Consists of at least two heavy chains and a number of intermediate and light chains.

The protein resides in the cytoplasm. It is found in the cytoskeleton. It localises to the cilium axoneme. Force generating protein of respiratory cilia. Produces force towards the minus ends of microtubules. Dynein has ATPase activity; the force-producing power stroke is thought to occur on release of ADP. Involved in sperm motility; implicated in sperm flagellar assembly. The chain is Dynein axonemal heavy chain 3 (Dnah3) from Mus musculus (Mouse).